A 242-amino-acid polypeptide reads, in one-letter code: UDP-2,3-diacylglucosamine hydrolase (242 aa).

Residues Asp7, His9, Asp40, Asn78, and His113 each coordinate Mn(2+). Position 78 to 79 (78 to 79) interacts with substrate; the sequence is NR. Positions 121, 159, 163, 166, and 194 each coordinate substrate. Residues His194 and His196 each contribute to the Mn(2+) site.

It belongs to the LpxH family. It depends on Mn(2+) as a cofactor.

It is found in the cell inner membrane. The enzyme catalyses UDP-2-N,3-O-bis[(3R)-3-hydroxytetradecanoyl]-alpha-D-glucosamine + H2O = 2-N,3-O-bis[(3R)-3-hydroxytetradecanoyl]-alpha-D-glucosaminyl 1-phosphate + UMP + 2 H(+). It participates in glycolipid biosynthesis; lipid IV(A) biosynthesis; lipid IV(A) from (3R)-3-hydroxytetradecanoyl-[acyl-carrier-protein] and UDP-N-acetyl-alpha-D-glucosamine: step 4/6. Functionally, hydrolyzes the pyrophosphate bond of UDP-2,3-diacylglucosamine to yield 2,3-diacylglucosamine 1-phosphate (lipid X) and UMP by catalyzing the attack of water at the alpha-P atom. Involved in the biosynthesis of lipid A, a phosphorylated glycolipid that anchors the lipopolysaccharide to the outer membrane of the cell. This chain is UDP-2,3-diacylglucosamine hydrolase, found in Ectopseudomonas mendocina (strain ymp) (Pseudomonas mendocina).